The chain runs to 353 residues: Probable dual-specificity RNA methyltransferase RlmN (353 aa).

The Proton acceptor role is filled by Glu-104. A Radical SAM core domain is found at 112–341 (DGGRKTICIS…ILNRRSPGKD (230 aa)). Cys-119 and Cys-346 are disulfide-bonded. Residues Cys-126, Cys-130, and Cys-133 each contribute to the [4Fe-4S] cluster site. Residues 173-174 (GE), Ser-205, 228-230 (SLN), and Asn-304 each bind S-adenosyl-L-methionine. Residue Cys-346 is the S-methylcysteine intermediate of the active site.

This sequence belongs to the radical SAM superfamily. RlmN family. [4Fe-4S] cluster serves as cofactor.

The protein resides in the cytoplasm. It carries out the reaction adenosine(2503) in 23S rRNA + 2 reduced [2Fe-2S]-[ferredoxin] + 2 S-adenosyl-L-methionine = 2-methyladenosine(2503) in 23S rRNA + 5'-deoxyadenosine + L-methionine + 2 oxidized [2Fe-2S]-[ferredoxin] + S-adenosyl-L-homocysteine. The enzyme catalyses adenosine(37) in tRNA + 2 reduced [2Fe-2S]-[ferredoxin] + 2 S-adenosyl-L-methionine = 2-methyladenosine(37) in tRNA + 5'-deoxyadenosine + L-methionine + 2 oxidized [2Fe-2S]-[ferredoxin] + S-adenosyl-L-homocysteine. Specifically methylates position 2 of adenine 2503 in 23S rRNA and position 2 of adenine 37 in tRNAs. In Leptospira interrogans serogroup Icterohaemorrhagiae serovar copenhageni (strain Fiocruz L1-130), this protein is Probable dual-specificity RNA methyltransferase RlmN.